A 252-amino-acid chain; its full sequence is 2-succinyl-6-hydroxy-2,4-cyclohexadiene-1-carboxylate synthase (252 aa).

It belongs to the AB hydrolase superfamily. MenH family. Monomer.

The enzyme catalyses 5-enolpyruvoyl-6-hydroxy-2-succinyl-cyclohex-3-ene-1-carboxylate = (1R,6R)-6-hydroxy-2-succinyl-cyclohexa-2,4-diene-1-carboxylate + pyruvate. It participates in quinol/quinone metabolism; 1,4-dihydroxy-2-naphthoate biosynthesis; 1,4-dihydroxy-2-naphthoate from chorismate: step 3/7. The protein operates within quinol/quinone metabolism; menaquinone biosynthesis. Catalyzes a proton abstraction reaction that results in 2,5-elimination of pyruvate from 2-succinyl-5-enolpyruvyl-6-hydroxy-3-cyclohexene-1-carboxylate (SEPHCHC) and the formation of 2-succinyl-6-hydroxy-2,4-cyclohexadiene-1-carboxylate (SHCHC). The sequence is that of 2-succinyl-6-hydroxy-2,4-cyclohexadiene-1-carboxylate synthase from Salmonella typhi.